The primary structure comprises 548 residues: MPSVMKCGYLATAGLIGICIHLWYFRYGEHHLYPWRYVRFHLCLTMGVSALLYAKKPPQYTLSPGDLVKDTCLLMVTYLIGLFTSLLLYRTLFHPLRQIRGPWAAKVSSFWLSFRLRRGPSFRILHELHEEYGPVVRVGPSEVSIIHPEAIGIIYGPNSRCSKNAFYDNGHPMMSLHSYRDRTAHDQRRRVWSAGFGDRALRGYEQRMRVYRQKLFQRLEERADAESTINISQWFNFYSYDTMGDLAFARSFDMLDASRNHWAVDMLMHGMIGYRYLFPSWFFRLLATMPSLSNDWHKFIGFATDTMLRRLREQVGVPDIFASLLAPLNGRDPTDDERNMLMGDAMLIITAGSDTTATSLTSIVYELARRPDEVDKLRAEIEPIEADSDGEYQHDTLAKLPHLNGFINEAFRLHSPIPGVIPRKTPPEGIHVKDIFIPGNMTVFSPQWSMGRSEAAYVDPAIFNPERWYKHIDLVKEKSVFAPFSIGPYSCIGKPLAMMNIRTTVARLIMRFDVRFPEGEDGIRWMDAADEHFAMGIHQMPVVLTRRH.

The next 3 membrane-spanning stretches (helical) occupy residues 5-25 (MKCG…LWYF), 35-54 (WRYV…LLYA), and 73-93 (LLMV…RTLF). Residue cysteine 491 participates in heme binding.

It belongs to the cytochrome P450 family. Heme serves as cofactor.

Its subcellular location is the membrane. The catalysed reaction is tryprostatin B + reduced [NADPH--hemoprotein reductase] + O2 = 6-hydroxytryprostatin B + oxidized [NADPH--hemoprotein reductase] + H2O + H(+). It participates in mycotoxin biosynthesis. Functionally, cytochrome P450 monooxygenase; part of the gene cluster that mediates the biosynthesis of fumitremorgins, indole alkaloids that carry not only intriguing chemical structures, but also interesting biological and pharmacological activities. The biosynthesis of fumitremorgin-type alkaloids begins by condensation of the two amino acids L-tryptophan and L-proline to brevianamide F, catalyzed by the non-ribosomal peptide synthetase ftmPS/ftmA. Brevianamide F is then prenylated by the prenyltransferase ftmPT1/ftmB in the presence of dimethylallyl diphosphate, resulting in the formation of tryprostatin B. The three cytochrome P450 monooxygenases, ftmP450-1/ftmC, ftmP450-2/ftmE and ftmP450-3/FtmG, are responsible for the conversion of tryprostatin B to 6-hydroxytryprostatin B, tryprostatin A to fumitremorgin C and fumitremorgin C to 12,13-dihydroxyfumitremorgin C, respectively. The putative methyltransferase ftmMT/ftmD is expected for the conversion of 6-hydroxytryprostatin B to tryprostatin A. FtmPT2/FtmH catalyzes the prenylation of 12,13-dihydroxyfumitre-morgin C in the presence of dimethylallyl diphosphate, resulting in the formation of fumitremorgin B. Fumitremorgin B is further converted to verruculogen by ftmOx1/ftmF via the insertion of an endoperoxide bond between the two prenyl moieties. Finally, verruculogen is further converted to fumitremorgin A by the verruculogen prenyltransferase ftmPT3. This is Tryprostatin B 6-hydroxylase from Neosartorya fischeri (strain ATCC 1020 / DSM 3700 / CBS 544.65 / FGSC A1164 / JCM 1740 / NRRL 181 / WB 181) (Aspergillus fischerianus).